Reading from the N-terminus, the 555-residue chain is Glutamine--tRNA ligase (555 aa).

Positions 35-45 (PEPNGYLHIGH) match the 'HIGH' region motif. Residues 36 to 38 (EPN) and 42 to 48 (HIGHAKS) contribute to the ATP site. 2 residues coordinate L-glutamine: aspartate 68 and tyrosine 213. ATP contacts are provided by residues threonine 232, 262–263 (RL), and 270–272 (MSK). The short motif at 269–273 (VMSKR) is the 'KMSKS' region element.

It belongs to the class-I aminoacyl-tRNA synthetase family. Monomer.

The protein resides in the cytoplasm. It catalyses the reaction tRNA(Gln) + L-glutamine + ATP = L-glutaminyl-tRNA(Gln) + AMP + diphosphate. This chain is Glutamine--tRNA ligase, found in Photobacterium profundum (strain SS9).